The sequence spans 439 residues: D-inositol 3-phosphate glycosyltransferase (439 aa).

1D-myo-inositol 3-phosphate is bound at residue H21. UDP-N-acetyl-alpha-D-glucosamine-binding positions include 27–28 (QP) and G35. Residues 32–37 (DAGGMN), K90, Y123, T147, and R167 contribute to the 1D-myo-inositol 3-phosphate site. Residues R241, K246, and Q299 each contribute to the UDP-N-acetyl-alpha-D-glucosamine site. Mg(2+) contacts are provided by Y308, R309, and A311. UDP-N-acetyl-alpha-D-glucosamine is bound by residues E321 and E329. T335 is a binding site for Mg(2+).

This sequence belongs to the glycosyltransferase group 1 family. MshA subfamily. Homodimer.

The enzyme catalyses 1D-myo-inositol 3-phosphate + UDP-N-acetyl-alpha-D-glucosamine = 1D-myo-inositol 2-acetamido-2-deoxy-alpha-D-glucopyranoside 3-phosphate + UDP + H(+). In terms of biological role, catalyzes the transfer of a N-acetyl-glucosamine moiety to 1D-myo-inositol 3-phosphate to produce 1D-myo-inositol 2-acetamido-2-deoxy-glucopyranoside 3-phosphate in the mycothiol biosynthesis pathway. The protein is D-inositol 3-phosphate glycosyltransferase of Mycobacterium sp. (strain KMS).